A 152-amino-acid polypeptide reads, in one-letter code: Regulatory protein RecX (152 aa).

This sequence belongs to the RecX family.

The protein localises to the cytoplasm. In terms of biological role, modulates RecA activity. The polypeptide is Regulatory protein RecX (Chromohalobacter salexigens (strain ATCC BAA-138 / DSM 3043 / CIP 106854 / NCIMB 13768 / 1H11)).